The chain runs to 360 residues: MLTLSDFDFDLPPELIAQTALPERSASRLLEVDNTNPSAPPRLIDRRFAELPACVAPGDLLVFNDTKVLKARFFGRKASGGKIEVLIERVTGERTALAQIRASKSPPPGTTLTLADAFDVTVGERVEPFFTLHFPDNCLVLIERHGRLPLPPYIEHAPDAADETRYQTVFAANPGAVAAPTAGLHFDDAVLAALEARGVERATLTLHVGAGTFQPVRVENLAEHRMHSESYELTDALVEKIAATRARGGRVIAVGTTSMRALEAAARDAQAAGRPLAATRAETDIFITPGYRFRVVDRLVTNFHLPKSTLLMLVSAFAGIETIRAAYRHAIDARYRFFSYGDAMLLTRRDDAAEATHGGA.

This sequence belongs to the QueA family. As to quaternary structure, monomer.

The protein resides in the cytoplasm. The enzyme catalyses 7-aminomethyl-7-carbaguanosine(34) in tRNA + S-adenosyl-L-methionine = epoxyqueuosine(34) in tRNA + adenine + L-methionine + 2 H(+). The protein operates within tRNA modification; tRNA-queuosine biosynthesis. In terms of biological role, transfers and isomerizes the ribose moiety from AdoMet to the 7-aminomethyl group of 7-deazaguanine (preQ1-tRNA) to give epoxyqueuosine (oQ-tRNA). The sequence is that of S-adenosylmethionine:tRNA ribosyltransferase-isomerase from Burkholderia mallei (strain NCTC 10247).